The following is a 285-amino-acid chain: SLAM family member 9 (285 aa).

An N-terminal signal peptide occupies residues 1-17 (MGALLWSLLLLLQEAKG). At 18–232 (FSGDDEDPEE…YPEKPSMLCL (215 aa)) the chain is on the extracellular side. Residues 25–126 (PEEVIGVLQE…SHITKSYHLR (102 aa)) enclose the Ig-like V-type domain. N-linked (GlcNAc...) asparagine glycosylation is found at N37, N97, N141, N149, N175, and N206. One can recognise an Ig-like C2-type domain in the interval 134–213 (PHITVNSNIS…VSNISSRRIS (80 aa)). C154 and C198 are oxidised to a cystine. The helical transmembrane segment at 233–253 (LVKSLFLLLLLAILTVGLCLF) threads the bilayer. The Cytoplasmic segment spans residues 254-285 (RAQKSYETPRVRKLKRNRIKLRKKGKSGPTPV).

The protein resides in the membrane. In terms of biological role, may play a role in the immune response. This Mus musculus (Mouse) protein is SLAM family member 9 (Slamf9).